An 88-amino-acid polypeptide reads, in one-letter code: Conotoxin Ca8.3 (88 aa).

The N-terminal stretch at methionine 1–glutamine 21 is a signal peptide. The propeptide occupies glutamine 22–arginine 46.

This sequence belongs to the conotoxin S superfamily. Contains 5 disulfide bonds. In terms of tissue distribution, expressed by the venom duct.

The protein localises to the secreted. The chain is Conotoxin Ca8.3 from Conus caracteristicus (Characteristic cone).